Consider the following 319-residue polypeptide: Tetrahydromethanopterin S-methyltransferase subunit H (319 aa).

It belongs to the MtrH family. As to quaternary structure, the complex is composed of 8 subunits; MtrA, MtrB, MtrC, MtrD, MtrE, MtrF, MtrG and MtrH.

It carries out the reaction 5-methyl-5,6,7,8-tetrahydromethanopterin + coenzyme M + 2 Na(+)(in) = 5,6,7,8-tetrahydromethanopterin + methyl-coenzyme M + 2 Na(+)(out). It functions in the pathway one-carbon metabolism; methanogenesis from CO(2); methyl-coenzyme M from 5,10-methylene-5,6,7,8-tetrahydromethanopterin: step 2/2. Functionally, part of a complex that catalyzes the formation of methyl-coenzyme M and tetrahydromethanopterin from coenzyme M and methyl-tetrahydromethanopterin. This is an energy-conserving, sodium-ion translocating step. MtrH catalyzes the transfer of the methyl group from methyl-tetrahydromethanopterin to the corrinoid prosthetic group of MtrA. The chain is Tetrahydromethanopterin S-methyltransferase subunit H from Methanococcus aeolicus (strain ATCC BAA-1280 / DSM 17508 / OCM 812 / Nankai-3).